The primary structure comprises 399 residues: Peroxisome assembly protein 12 (399 aa).

Residues 1-24 (MSFYSNLPSAGQSSRGSSTSGRNG) form a disordered region. Over 1–33 (MSFYSNLPSAGQSSRGSSTSGRNGVGLEPLYPT) the chain is Peroxisomal matrix. Low complexity predominate over residues 9-24 (SAGQSSRGSSTSGRNG). The helical transmembrane segment at 34-62 (IFEIMSSQEIDSLLPASIRYLLANHLVAN) threads the bilayer. The Cytoplasmic segment spans residues 63-67 (FPNRY). A helical transmembrane segment spans residues 68–92 (TLRLNKYFFEWFQAIKGFVEWYHLK). At 93 to 136 (TYNSTFIDRFYGLQLFSSRDRNLALTQCLNPKGQSEWPQGLQLN) the chain is on the peroxisomal matrix side. A helical membrane pass occupies residues 137–168 (QQQKSVIFLEKIILPYITAKLDEILEKISMNN). Over 169-171 (IFS) the chain is Cytoplasmic. A helical membrane pass occupies residues 172–208 (SDETENKWPKRAFLRIYPFIKKLLALSNLLVKLLFLT). Over 209 to 277 (KRTGSVSLLQ…PRFLTFMGSQ (69 aa)) the chain is Peroxisomal matrix. A helical membrane pass occupies residues 278–305 (FFPTFIFVLRVYQWWTTQDMTTKLQKRV). The Cytoplasmic segment spans residues 306–399 (NDLDEDIPRP…VVTGIRKLLI (94 aa)). 4 residues coordinate Zn(2+): Cys-334, Cys-337, Cys-354, and Cys-357. The RING-type; degenerate zinc-finger motif lies at 334–373 (CPVCEKTVQNPCVLETGYVACYPCAISYLVNNEGHCPVTN).

This sequence belongs to the pex2/pex10/pex12 family. As to quaternary structure, component of the PEX2-PEX10-PEX12 retrotranslocation channel, composed of PEX2, PEX10 and PEX12.

It is found in the peroxisome membrane. The protein operates within protein modification; protein ubiquitination. In terms of biological role, component of a retrotranslocation channel required for peroxisome organization by mediating export of the PEX5 receptor from peroxisomes to the cytosol, thereby promoting PEX5 recycling. The retrotranslocation channel is composed of PEX2, PEX10 and PEX12; each subunit contributing transmembrane segments that coassemble into an open channel that specifically allows the passage of PEX5 through the peroxisomal membrane. PEX12 also regulates PEX5 recycling by activating the E3 ubiquitin-protein ligase activity of PEX10. When PEX5 recycling is compromised, PEX12 stimulates PEX10-mediated polyubiquitination of PEX5, leading to its subsequent degradation. The sequence is that of Peroxisome assembly protein 12 from Saccharomyces cerevisiae (strain ATCC 204508 / S288c) (Baker's yeast).